A 290-amino-acid polypeptide reads, in one-letter code: Light-independent protochlorophyllide reductase iron-sulfur ATP-binding protein (290 aa).

ATP is bound by residues 10–15 (GIGKST) and K39. S14 is a Mg(2+) binding site. 2 residues coordinate [4Fe-4S] cluster: C95 and C129. 180 to 181 (NR) lines the ATP pocket.

The protein belongs to the NifH/BchL/ChlL family. As to quaternary structure, homodimer. Protochlorophyllide reductase is composed of three subunits; ChlL, ChlN and ChlB. [4Fe-4S] cluster is required as a cofactor.

The protein localises to the plastid. The protein resides in the chloroplast. The catalysed reaction is chlorophyllide a + oxidized 2[4Fe-4S]-[ferredoxin] + 2 ADP + 2 phosphate = protochlorophyllide a + reduced 2[4Fe-4S]-[ferredoxin] + 2 ATP + 2 H2O. Its pathway is porphyrin-containing compound metabolism; chlorophyll biosynthesis (light-independent). Its function is as follows. Component of the dark-operative protochlorophyllide reductase (DPOR) that uses Mg-ATP and reduced ferredoxin to reduce ring D of protochlorophyllide (Pchlide) to form chlorophyllide a (Chlide). This reaction is light-independent. The L component serves as a unique electron donor to the NB-component of the complex, and binds Mg-ATP. The sequence is that of Light-independent protochlorophyllide reductase iron-sulfur ATP-binding protein from Porphyra purpurea (Red seaweed).